A 223-amino-acid chain; its full sequence is Small ribosomal subunit protein uS3 (223 aa).

The 69-residue stretch at 39–107 folds into the KH type-2 domain; the sequence is VREFLHKKLA…PVQINIEEVR (69 aa).

The protein belongs to the universal ribosomal protein uS3 family. Part of the 30S ribosomal subunit. Forms a tight complex with proteins S10 and S14.

In terms of biological role, binds the lower part of the 30S subunit head. Binds mRNA in the 70S ribosome, positioning it for translation. The chain is Small ribosomal subunit protein uS3 from Francisella tularensis subsp. novicida (strain U112).